A 695-amino-acid polypeptide reads, in one-letter code: NAD(P)H-quinone oxidoreductase subunit 5, chloroplastic (695 aa).

15 helical membrane-spanning segments follow: residues 1–21 (WIIP…LILF), 32–52 (WAFQ…YLSI), 81–101 (IDPL…MVLI), 117–137 (FAYM…SNLI), 139–159 (IYIF…FWFT), 177–197 (GDFG…SFEF), 211–231 (NEVN…GAVA), 250–270 (TPIS…FLVA), 278–298 (VIPY…LLGA), 319–339 (LGYM…FHLI), 346–366 (ALLF…VGYS), 388–408 (ITFL…CFWS), 417–437 (WLYS…TAFY), 535–555 (LFPI…GIPF), and 594–614 (VLSV…YKPI).

This sequence belongs to the complex I subunit 5 family. As to quaternary structure, NDH is composed of at least 16 different subunits, 5 of which are encoded in the nucleus.

The protein resides in the plastid. The protein localises to the chloroplast thylakoid membrane. It catalyses the reaction a plastoquinone + NADH + (n+1) H(+)(in) = a plastoquinol + NAD(+) + n H(+)(out). The enzyme catalyses a plastoquinone + NADPH + (n+1) H(+)(in) = a plastoquinol + NADP(+) + n H(+)(out). Its function is as follows. NDH shuttles electrons from NAD(P)H:plastoquinone, via FMN and iron-sulfur (Fe-S) centers, to quinones in the photosynthetic chain and possibly in a chloroplast respiratory chain. The immediate electron acceptor for the enzyme in this species is believed to be plastoquinone. Couples the redox reaction to proton translocation, and thus conserves the redox energy in a proton gradient. The sequence is that of NAD(P)H-quinone oxidoreductase subunit 5, chloroplastic (ndhF) from Capsicum baccatum (Peruvian pepper).